The following is a 630-amino-acid chain: Biosynthetic arginine decarboxylase (630 aa).

N6-(pyridoxal phosphate)lysine is present on K99. 281–291 lines the substrate pocket; sequence VDIGGGLGVDY.

This sequence belongs to the Orn/Lys/Arg decarboxylase class-II family. SpeA subfamily. Mg(2+) serves as cofactor. Requires pyridoxal 5'-phosphate as cofactor.

The catalysed reaction is L-arginine + H(+) = agmatine + CO2. It participates in amine and polyamine biosynthesis; agmatine biosynthesis; agmatine from L-arginine: step 1/1. Catalyzes the biosynthesis of agmatine from arginine. The polypeptide is Biosynthetic arginine decarboxylase (Bacteroides fragilis (strain ATCC 25285 / DSM 2151 / CCUG 4856 / JCM 11019 / LMG 10263 / NCTC 9343 / Onslow / VPI 2553 / EN-2)).